Reading from the N-terminus, the 417-residue chain is Tryptophan synthase beta chain (417 aa).

Lys-99 is modified (N6-(pyridoxal phosphate)lysine).

This sequence belongs to the TrpB family. In terms of assembly, tetramer of two alpha and two beta chains. The cofactor is pyridoxal 5'-phosphate.

The catalysed reaction is (1S,2R)-1-C-(indol-3-yl)glycerol 3-phosphate + L-serine = D-glyceraldehyde 3-phosphate + L-tryptophan + H2O. It participates in amino-acid biosynthesis; L-tryptophan biosynthesis; L-tryptophan from chorismate: step 5/5. Functionally, the beta subunit is responsible for the synthesis of L-tryptophan from indole and L-serine. In Corynebacterium glutamicum (strain ATCC 13032 / DSM 20300 / JCM 1318 / BCRC 11384 / CCUG 27702 / LMG 3730 / NBRC 12168 / NCIMB 10025 / NRRL B-2784 / 534), this protein is Tryptophan synthase beta chain (trpB).